Consider the following 429-residue polypeptide: Glutamate-1-semialdehyde 2,1-aminomutase 2 (429 aa).

Residue K268 is modified to N6-(pyridoxal phosphate)lysine.

It belongs to the class-III pyridoxal-phosphate-dependent aminotransferase family. HemL subfamily. Homodimer. Pyridoxal 5'-phosphate is required as a cofactor.

The protein resides in the cytoplasm. It carries out the reaction (S)-4-amino-5-oxopentanoate = 5-aminolevulinate. The protein operates within porphyrin-containing compound metabolism; protoporphyrin-IX biosynthesis; 5-aminolevulinate from L-glutamyl-tRNA(Glu): step 2/2. This is Glutamate-1-semialdehyde 2,1-aminomutase 2 from Bacillus cereus (strain B4264).